Consider the following 547-residue polypeptide: Vacuolar fusion protein MON1 homolog B (547 aa).

Methionine 1 carries the N-acetylmethionine modification. Residues 1–106 are disordered; the sequence is MEAGGDTAAP…GGDPSDEEWR (106 aa). Over residues 57–66 the composition is skewed to pro residues; it reads PPSPSPPPQS. A phosphoserine mark is found at serine 59 and serine 61.

Belongs to the MON1/SAND family. As to quaternary structure, interacts with CCNT2; down-regulates CCNT2-mediated activation of viral promoters during herpes simplex virus 1/HHV-1 infection. Found in a complex with RMC1, CCZ1 MON1A and MON1B.

The chain is Vacuolar fusion protein MON1 homolog B (MON1B) from Macaca fascicularis (Crab-eating macaque).